The primary structure comprises 336 residues: Heme A synthase (336 aa).

Transmembrane regions (helical) follow at residues 5-25 (LTRW…VGGI), 92-112 (GRAT…KGII), 117-137 (ILSY…GWYM), 153-173 (LAFH…KLVK), 191-211 (LIFS…GALV), 253-273 (FIHR…IISL), 284-304 (VAFY…ITLL), and 307-327 (VPII…SVVI). Histidine 255 contacts heme. A heme-binding site is contributed by histidine 315.

It belongs to the COX15/CtaA family. Type 2 subfamily. Interacts with CtaB. Requires heme b as cofactor.

The protein localises to the cell membrane. The enzyme catalyses Fe(II)-heme o + 2 A + H2O = Fe(II)-heme a + 2 AH2. It participates in porphyrin-containing compound metabolism; heme A biosynthesis; heme A from heme O: step 1/1. Its function is as follows. Catalyzes the conversion of heme O to heme A by two successive hydroxylations of the methyl group at C8. The first hydroxylation forms heme I, the second hydroxylation results in an unstable dihydroxymethyl group, which spontaneously dehydrates, resulting in the formyl group of heme A. The protein is Heme A synthase of Rickettsia bellii (strain RML369-C).